The sequence spans 135 residues: Lactoylglutathione lyase (135 aa).

The VOC domain maps to 2–126; it reads RLLHTMLRVG…DGYKIELIEE (125 aa). Residue His-5 coordinates Ni(2+). Arg-9 is a binding site for substrate. Residue Glu-56 participates in Ni(2+) binding. The substrate site is built by Asn-60 and His-74. The Ni(2+) site is built by His-74 and Glu-122. The Proton donor/acceptor role is filled by Glu-122.

This sequence belongs to the glyoxalase I family. In terms of assembly, homodimer. It depends on Ni(2+) as a cofactor.

The enzyme catalyses (R)-S-lactoylglutathione = methylglyoxal + glutathione. Its pathway is secondary metabolite metabolism; methylglyoxal degradation; (R)-lactate from methylglyoxal: step 1/2. Catalyzes the conversion of hemimercaptal, formed from methylglyoxal and glutathione, to S-lactoylglutathione. This chain is Lactoylglutathione lyase (gloA), found in Escherichia coli O157:H7.